Consider the following 185-residue polypeptide: NEDD8-conjugating enzyme UBE2F (185 aa).

At methionine 1 the chain carries N-acetylmethionine. The 154-residue stretch at 32-185 folds into the UBC core domain; that stretch reads VRDKLLVKEV…VDEYIKRYAR (154 aa). The active-site Glycyl thioester intermediate is the cysteine 116.

Belongs to the ubiquitin-conjugating enzyme family. UBE2F subfamily. In terms of assembly, interacts with UBA3 and RBX2. Interacts (N-terminally acetylated form) with (via DCUN1 domain) DCUN1D1, DCUN1D2, DCUN1D3, DCUN1D4 and DCUN1D5. The acetylation of Met-1 increases affinity for DCUN1D3 by about 2 orders of magnitude and is crucial for NEDD8 transfer to cullins.

It catalyses the reaction [E1 NEDD8-activating enzyme]-S-[NEDD8 protein]-yl-L-cysteine + [E2 NEDD8-conjugating enzyme]-L-cysteine = [E1 NEDD8-activating enzyme]-L-cysteine + [E2 NEDD8-conjugating enzyme]-S-[NEDD8-protein]-yl-L-cysteine.. The protein operates within protein modification; protein neddylation. Its function is as follows. Accepts the ubiquitin-like protein NEDD8 from the UBA3-NAE1 E1 complex and catalyzes its covalent attachment to other proteins. Together with the E3 ubiquitin ligase RNF7/RBX2, specifically neddylates cullin-5 (CUL5). Does not neddylate CUL1, CUL2, CUL3, CUL4A or CUL4B. Mediates neddylation of the CUL9-RBX1 complex. This is NEDD8-conjugating enzyme UBE2F (Ube2f) from Rattus norvegicus (Rat).